A 234-amino-acid polypeptide reads, in one-letter code: 2-C-methyl-D-erythritol 4-phosphate cytidylyltransferase (234 aa).

This sequence belongs to the IspD/TarI cytidylyltransferase family. IspD subfamily.

It carries out the reaction 2-C-methyl-D-erythritol 4-phosphate + CTP + H(+) = 4-CDP-2-C-methyl-D-erythritol + diphosphate. Its pathway is isoprenoid biosynthesis; isopentenyl diphosphate biosynthesis via DXP pathway; isopentenyl diphosphate from 1-deoxy-D-xylulose 5-phosphate: step 2/6. Functionally, catalyzes the formation of 4-diphosphocytidyl-2-C-methyl-D-erythritol from CTP and 2-C-methyl-D-erythritol 4-phosphate (MEP). The polypeptide is 2-C-methyl-D-erythritol 4-phosphate cytidylyltransferase (Desulforamulus reducens (strain ATCC BAA-1160 / DSM 100696 / MI-1) (Desulfotomaculum reducens)).